The following is a 110-amino-acid chain: uncharacterized protein (110 aa).

The next 2 membrane-spanning stretches (helical) occupy residues 6–26 (VSLY…IYNV) and 38–58 (TSGP…IIGP).

The protein resides in the membrane. This is an uncharacterized protein from Saccharomyces cerevisiae (strain ATCC 204508 / S288c) (Baker's yeast).